A 588-amino-acid polypeptide reads, in one-letter code: Adenine deaminase (588 aa).

Belongs to the metallo-dependent hydrolases superfamily. Adenine deaminase family. In terms of assembly, homodimer. Mn(2+) is required as a cofactor.

The catalysed reaction is adenine + H2O + H(+) = hypoxanthine + NH4(+). The chain is Adenine deaminase from Escherichia coli (strain SE11).